We begin with the raw amino-acid sequence, 405 residues long: MKSSKNDTFVYRTWFKTLVVYFVMFVMSAVVPITAMFPNLGYPCYFNALVDYGALNLTNYNLAHHLTPTLYLEPPEMFVYITLVFIADCVAFIYYACGEVALIKARKKVSGLTDLSAWVSAVGSPTVLFLAILKLWSIQVFIQVLSYKHVFLSAFVYFLHFLASVLHACACVTRFSPVWVVKAQDNSIPQDTFLWWVVFYLKPIVTNLYLGCLALETLVFSLSVFLALGNSFYFMVGDMVLGAVNLFLVLPIFWYILTEVWLASFLRHNFGFYCGMFIASIILILPLVRYEAVFVSAKLHTTVAINVAIIPILCSVAMLIRICRIFKSMRQGTDYVPVSETVELELESEPRPRPSRTPSPGRNRRRSSTSSSSSRSTRRQRPVSTQALISSVLPMTTDSEEEIFP.

Residues Met-1–Thr-17 are Intravirion-facing. The helical transmembrane segment at Leu-18–Pro-38 threads the bilayer. At Asn-39–Glu-76 the chain is on the virion surface side. The helical transmembrane segment at Met-77–Cys-97 threads the bilayer. Topologically, residues Gly-98 to Ala-121 are intravirion. A helical membrane pass occupies residues Val-122–Ile-142. At Gln-143 to His-149 the chain is on the virion surface side. The chain crosses the membrane as a helical span at residues Val-150–Ala-170. The Intravirion portion of the chain corresponds to Cys-171–Thr-192. A helical membrane pass occupies residues Phe-193 to Leu-215. The Virion surface segment spans residues Glu-216–Asn-245. A helical membrane pass occupies residues Leu-246–Leu-266. A topological domain (intravirion) is located at residue Arg-267. Residues His-268 to Val-288 traverse the membrane as a helical segment. Residues Arg-289–Leu-299 are Virion surface-facing. A helical membrane pass occupies residues His-300–Ile-320. The Intravirion segment spans residues Arg-321 to Pro-405. Residues Leu-346–Pro-405 are disordered. Residues Gln-386–Thr-397 are compositionally biased toward polar residues.

This sequence belongs to the herpesviridae glycoprotein M family. In terms of assembly, interacts (via N-terminus) with gN (via N-terminus). The gM-gN heterodimer forms the gCII complex.

It localises to the virion membrane. The protein resides in the host Golgi apparatus. It is found in the host trans-Golgi network. Its subcellular location is the host endosome membrane. The protein localises to the host nucleus inner membrane. Envelope glycoprotein important for virion assembly and egress. Plays a role in the correct incorporation of gH-gL into virion membrane. Directs the glycoprotein N (gN) to the host trans-Golgi network. The polypeptide is Envelope glycoprotein M (Homo sapiens (Human)).